A 279-amino-acid chain; its full sequence is Energy-coupling factor transporter ATP-binding protein EcfA1 (279 aa).

Residues 5–240 enclose the ABC transporter domain; the sequence is IELKKVTFNY…GDELLQLGLD (236 aa). 40 to 47 provides a ligand contact to ATP; it reads GHNGSGKS.

Belongs to the ABC transporter superfamily. Energy-coupling factor EcfA family. Forms a stable energy-coupling factor (ECF) transporter complex composed of 2 membrane-embedded substrate-binding proteins (S component), 2 ATP-binding proteins (A component) and 2 transmembrane proteins (T component).

It localises to the cell membrane. In terms of biological role, ATP-binding (A) component of a common energy-coupling factor (ECF) ABC-transporter complex. Unlike classic ABC transporters this ECF transporter provides the energy necessary to transport a number of different substrates. This chain is Energy-coupling factor transporter ATP-binding protein EcfA1, found in Streptococcus pyogenes serotype M28 (strain MGAS6180).